Consider the following 133-residue polypeptide: Small ribosomal subunit protein uS8 (133 aa).

It belongs to the universal ribosomal protein uS8 family. As to quaternary structure, part of the 30S ribosomal subunit. Contacts proteins S5 and S12.

In terms of biological role, one of the primary rRNA binding proteins, it binds directly to 16S rRNA central domain where it helps coordinate assembly of the platform of the 30S subunit. The protein is Small ribosomal subunit protein uS8 of Leptospira interrogans serogroup Icterohaemorrhagiae serovar copenhageni (strain Fiocruz L1-130).